The chain runs to 112 residues: FK506-binding protein 1A (112 aa).

Residues 20 to 108 (GDFVTIHYTG…IFEVELLGIN (89 aa)) form the PPIase FKBP-type domain.

It belongs to the FKBP-type PPIase family. FKBP1 subfamily.

The protein resides in the cytoplasm. The catalysed reaction is [protein]-peptidylproline (omega=180) = [protein]-peptidylproline (omega=0). Its activity is regulated as follows. Inhibited by both FK506 and rapamycin. Its function is as follows. PPIases accelerate the folding of proteins. It catalyzes the cis-trans isomerization of proline imidic peptide bonds in oligopeptides. This is FK506-binding protein 1A (fpr1A) from Aspergillus fumigatus (strain ATCC MYA-4609 / CBS 101355 / FGSC A1100 / Af293) (Neosartorya fumigata).